Consider the following 381-residue polypeptide: Regulatory protein RapF (381 aa).

The Mn(2+) site is built by Leu-40, Met-43, and Glu-45. 6 TPR repeats span residues 101-137, 148-181, 182-215, 222-255, 262-295, and 337-370; these read YYFNFFRGMYELDQREYLSAIKFFKKAESKLIFVKDR, SESYYYMKQTYFSMDYARQAYEIYKEHEAYNIRL, LQCHSLFATNFLDLKQYEDAISHFQKAYSMAEAE, GRTLYNIGLCKNSQSQYEDAIPYFKRAIAVFEES, PQAYFLITQIHYKLGKIDKAHEYHSKGMAYSQKA, and EDFAIDVAKYYHERKNFQKASAYFLKVEQVRQLI.

This sequence belongs to the Rap family. In terms of assembly, monomer. Is monomeric either alone or in complex with PhrF. Interacts specifically with the C-terminal DNA-binding domain of ComA. Interacts with PhrF.

Its subcellular location is the cytoplasm. With respect to regulation, inhibited by PhrF, which prevents RapF-ComA interaction. Interaction with PhrF induces a conformational change in RapF, which is propagated to the ComA binding site and causes the dissociation of ComA from RapF. In terms of biological role, involved in the regulation of genetic competence development. Inhibits the activity of ComA, a transcriptional factor that regulates the development of genetic competence. Acts by binding to ComA, leading to the inhibition of its DNA-binding activity. May also affect transcription independently of ComA. The protein is Regulatory protein RapF (rapF) of Bacillus subtilis (strain 168).